We begin with the raw amino-acid sequence, 64 residues long: Cytochrome c oxidase subunit 2 (64 aa).

Topologically, residues 1-14 are mitochondrial intermembrane; it reads MAHPSQLGFQDAAS. Residues 15–45 form a helical membrane-spanning segment; the sequence is PMMEELLHFHDHALMVVFLISTFVLYIILTM. Residues 46-64 are Mitochondrial matrix-facing; that stretch reads LTTKLTDKLILESHEIEII.

This sequence belongs to the cytochrome c oxidase subunit 2 family. Component of the cytochrome c oxidase (complex IV, CIV), a multisubunit enzyme composed of 14 subunits. The complex is composed of a catalytic core of 3 subunits MT-CO1, MT-CO2 and MT-CO3, encoded in the mitochondrial DNA, and 11 supernumerary subunits COX4I, COX5A, COX5B, COX6A, COX6B, COX6C, COX7A, COX7B, COX7C, COX8 and NDUFA4, which are encoded in the nuclear genome. The complex exists as a monomer or a dimer and forms supercomplexes (SCs) in the inner mitochondrial membrane with NADH-ubiquinone oxidoreductase (complex I, CI) and ubiquinol-cytochrome c oxidoreductase (cytochrome b-c1 complex, complex III, CIII), resulting in different assemblies (supercomplex SCI(1)III(2)IV(1) and megacomplex MCI(2)III(2)IV(2)). Found in a complex with TMEM177, COA6, COX18, COX20, SCO1 and SCO2. Interacts with TMEM177 in a COX20-dependent manner. Interacts with COX20. Interacts with COX16. Requires Cu cation as cofactor.

It localises to the mitochondrion inner membrane. The catalysed reaction is 4 Fe(II)-[cytochrome c] + O2 + 8 H(+)(in) = 4 Fe(III)-[cytochrome c] + 2 H2O + 4 H(+)(out). Component of the cytochrome c oxidase, the last enzyme in the mitochondrial electron transport chain which drives oxidative phosphorylation. The respiratory chain contains 3 multisubunit complexes succinate dehydrogenase (complex II, CII), ubiquinol-cytochrome c oxidoreductase (cytochrome b-c1 complex, complex III, CIII) and cytochrome c oxidase (complex IV, CIV), that cooperate to transfer electrons derived from NADH and succinate to molecular oxygen, creating an electrochemical gradient over the inner membrane that drives transmembrane transport and the ATP synthase. Cytochrome c oxidase is the component of the respiratory chain that catalyzes the reduction of oxygen to water. Electrons originating from reduced cytochrome c in the intermembrane space (IMS) are transferred via the dinuclear copper A center (CU(A)) of subunit 2 and heme A of subunit 1 to the active site in subunit 1, a binuclear center (BNC) formed by heme A3 and copper B (CU(B)). The BNC reduces molecular oxygen to 2 water molecules using 4 electrons from cytochrome c in the IMS and 4 protons from the mitochondrial matrix. This Geophagus steindachneri (Red hump earth eater) protein is Cytochrome c oxidase subunit 2 (mt-co2).